The sequence spans 270 residues: HTH-type transcriptional activator AllS (270 aa).

Positions 4 to 61 (LDPETLRTFVSVAETGSFSRAAEKLYKTTATISYRIKLLEDNTGVALFSRTTRSVLLT) constitute an HTH lysR-type domain. The segment at residues 21–40 (FSRAAEKLYKTTATISYRIK) is a DNA-binding region (H-T-H motif).

It belongs to the LysR transcriptional regulatory family.

Its function is as follows. Positive regulator essential for the expression of allD operon. Binds to the allD promoter. The polypeptide is HTH-type transcriptional activator AllS (allS) (Klebsiella pneumoniae).